Reading from the N-terminus, the 363-residue chain is MPREKVRVLIVDDSASVRQILQTILNDDPDIEVMGTASDPFAAARRLQNEIPDVMILDIEMPRMDGMTFLRKIMAQRPIPVIICSSLTEEGSNVMFEAFEAGAVDIVPKPKIDTRQALLECSTRLREAVKSAARARVRPRAERRVVEKKLTADAIIPPPVQGKVRPTTERIVCIGASTGGTEALNDVLEMLPPHCPPLLIVQHMPAGFTAAFARRLDSVCQIRVKEAEDGEPVLPGSAYIAPGARHMLLQRIGLRYQIAIKDGPPVSRHRPSVDVLFRSAAQHAGANALGVIMTGMGDDGARGMLEMRKLGASTRAQDEDSCVVFGMPKEAIAHGGVEKVVPLHHIPREIMLWYQAGHVAVAG.

The Response regulatory domain occupies 7–124; that stretch reads RVLIVDDSAS…RQALLECSTR (118 aa). D58 is subject to 4-aspartylphosphate. Residues 166–357 form the CheB-type methylesterase domain; the sequence is PTTERIVCIG…REIMLWYQAG (192 aa). Catalysis depends on residues S177, H203, and D299.

This sequence belongs to the CheB family. In terms of processing, phosphorylated by CheA. Phosphorylation of the N-terminal regulatory domain activates the methylesterase activity.

It localises to the cytoplasm. It carries out the reaction [protein]-L-glutamate 5-O-methyl ester + H2O = L-glutamyl-[protein] + methanol + H(+). It catalyses the reaction L-glutaminyl-[protein] + H2O = L-glutamyl-[protein] + NH4(+). Its function is as follows. Involved in chemotaxis. Part of a chemotaxis signal transduction system that modulates chemotaxis in response to various stimuli. Catalyzes the demethylation of specific methylglutamate residues introduced into the chemoreceptors (methyl-accepting chemotaxis proteins or MCP) by CheR. Also mediates the irreversible deamidation of specific glutamine residues to glutamic acid. In Bradyrhizobium diazoefficiens (strain JCM 10833 / BCRC 13528 / IAM 13628 / NBRC 14792 / USDA 110), this protein is Protein-glutamate methylesterase/protein-glutamine glutaminase of group 3 operon.